Here is a 305-residue protein sequence, read N- to C-terminus: 2-methoxy-6-polyprenyl-1,4-benzoquinol methylase, mitochondrial (305 aa).

A mitochondrion-targeting transit peptide spans 1-34 (MSRLRAPVAKFLADGLKGIRSTALAGSRLSNCRY). S-adenosyl-L-methionine is bound by residues Thr-117, Asp-143, and 173–174 (NA).

Belongs to the class I-like SAM-binding methyltransferase superfamily. MenG/UbiE family. As to quaternary structure, component of a multi-subunit COQ enzyme complex, composed of at least COQ3, COQ4, COQ5, COQ6, COQ7 and COQ9.

It localises to the mitochondrion inner membrane. The enzyme catalyses 2-methoxy-6-(all-trans-decaprenyl)benzene-1,4-diol + S-adenosyl-L-methionine = 5-methoxy-2-methyl-3-(all-trans-decaprenyl)benzene-1,4-diol + S-adenosyl-L-homocysteine + H(+). It functions in the pathway cofactor biosynthesis; ubiquinone biosynthesis. In terms of biological role, methyltransferase required for the conversion of 2-decaprenyl-6-methoxy-1,4-benzoquinol (DDMQH2) to 2-decaprenyl-3-methyl-6-methoxy-1,4-benzoquinol (DMQH2). In Schizosaccharomyces pombe (strain 972 / ATCC 24843) (Fission yeast), this protein is 2-methoxy-6-polyprenyl-1,4-benzoquinol methylase, mitochondrial.